Consider the following 298-residue polypeptide: Glutamyl-Q tRNA(Asp) synthetase (298 aa).

L-glutamate contacts are provided by residues 9 to 13 (RFAPS) and E45. The short motif at 12–22 (PSPSGELHFGS) is the 'HIGH' region element. The Zn(2+) site is built by C101, C103, Y115, and C119. L-glutamate contacts are provided by Y172 and R190. Positions 228-232 (KLSKQ) match the 'KMSKS' region motif. K231 contributes to the ATP binding site.

This sequence belongs to the class-I aminoacyl-tRNA synthetase family. GluQ subfamily. Zn(2+) serves as cofactor.

Catalyzes the tRNA-independent activation of glutamate in presence of ATP and the subsequent transfer of glutamate onto a tRNA(Asp). Glutamate is transferred on the 2-amino-5-(4,5-dihydroxy-2-cyclopenten-1-yl) moiety of the queuosine in the wobble position of the QUC anticodon. This chain is Glutamyl-Q tRNA(Asp) synthetase, found in Citrobacter koseri (strain ATCC BAA-895 / CDC 4225-83 / SGSC4696).